Here is a 140-residue protein sequence, read N- to C-terminus: Ribosome maturation factor RimP (140 aa).

The protein belongs to the RimP family.

The protein localises to the cytoplasm. Functionally, required for maturation of 30S ribosomal subunits. The sequence is that of Ribosome maturation factor RimP from Campylobacter fetus subsp. fetus (strain 82-40).